The sequence spans 1177 residues: Dynein axonemal assembly factor 9 (1177 aa).

The disordered stretch occupies residues 1 to 27 (MDVYPPRRQGLPRARSPGGSSRGSPSV). The span at 11–27 (LPRARSPGGSSRGSPSV) shows a compositional bias: low complexity.

In terms of assembly, interacts with ARL3.

May act as an effector for ARL3. The chain is Dynein axonemal assembly factor 9 from Homo sapiens (Human).